The chain runs to 90 residues: MARTVQCIKLGKEAEGLDFPPYPGELGQRIWANVSKQAWAGWLKHQTMLVNENRLNLADARARQYLARQMENHFFGSGADAAAGYVPPSA.

The protein belongs to the Fe(2+)-trafficking protein family.

Its function is as follows. Could be a mediator in iron transactions between iron acquisition and iron-requiring processes, such as synthesis and/or repair of Fe-S clusters in biosynthetic enzymes. The protein is Probable Fe(2+)-trafficking protein of Verminephrobacter eiseniae (strain EF01-2).